The primary structure comprises 92 residues: Long neurotoxin 2 (92 aa).

The N-terminal stretch at methionine 1 to threonine 21 is a signal peptide. 5 disulfide bridges follow: cysteine 24/cysteine 42, cysteine 35/cysteine 63, cysteine 48/cysteine 52, cysteine 67/cysteine 79, and cysteine 80/cysteine 85.

It belongs to the three-finger toxin family. Long-chain subfamily. Type II alpha-neurotoxin sub-subfamily. Expressed by the venom gland.

It is found in the secreted. Its function is as follows. Binds with high affinity to muscular (alpha-1/CHRNA1) and neuronal (alpha-7/CHRNA7) nicotinic acetylcholine receptor (nAChR) and inhibits acetylcholine from binding to the receptor, thereby impairing neuromuscular and neuronal transmission. In Oxyuranus microlepidotus (Inland taipan), this protein is Long neurotoxin 2.